The sequence spans 366 residues: 3-dehydroquinate synthase (366 aa).

NAD(+) is bound by residues 107-111 (GVIGD), 131-132 (TT), K144, and K153. Positions 186, 251, and 268 each coordinate Zn(2+).

The protein belongs to the sugar phosphate cyclases superfamily. Dehydroquinate synthase family. Co(2+) is required as a cofactor. Zn(2+) serves as cofactor. It depends on NAD(+) as a cofactor.

It is found in the cytoplasm. It catalyses the reaction 7-phospho-2-dehydro-3-deoxy-D-arabino-heptonate = 3-dehydroquinate + phosphate. Its pathway is metabolic intermediate biosynthesis; chorismate biosynthesis; chorismate from D-erythrose 4-phosphate and phosphoenolpyruvate: step 2/7. In terms of biological role, catalyzes the conversion of 3-deoxy-D-arabino-heptulosonate 7-phosphate (DAHP) to dehydroquinate (DHQ). This chain is 3-dehydroquinate synthase, found in Microcystis aeruginosa (strain NIES-843 / IAM M-2473).